A 263-amino-acid polypeptide reads, in one-letter code: Probable 6-oxopurine nucleoside phosphorylase (263 aa).

Phosphate is bound by residues Thr9, 49–50 (RH), and 82–83 (TA). Position 181 (Met181) interacts with substrate. Thr182 contacts phosphate. 205 to 207 (NYA) provides a ligand contact to substrate.

This sequence belongs to the PNP/MTAP phosphorylase family. MTAP subfamily. In terms of assembly, homohexamer. Dimer of a homotrimer.

The catalysed reaction is a purine D-ribonucleoside + phosphate = a purine nucleobase + alpha-D-ribose 1-phosphate. The protein operates within purine metabolism; purine nucleoside salvage. Its function is as follows. Purine nucleoside phosphorylase which is highly specific for 6-oxopurine nucleosides. Cleaves guanosine or inosine to respective bases and sugar-1-phosphate molecules. Involved in purine salvage. The polypeptide is Probable 6-oxopurine nucleoside phosphorylase (Dictyoglomus turgidum (strain DSM 6724 / Z-1310)).